Reading from the N-terminus, the 586-residue chain is MVVGKIIKISGPVVVAEGMKGSQMFEVVKVGNEGLTGEIIQLTEDEAIIQVYEETAGIKPGEGVEGTGAPLSVELGPGMLKAMYDGIQRPLNEIENATDSIYIPRGVSVPSISRDIKWDFEATAAVGDEVITGDVIGTVQETASIVHKIMIPLGISGKIKEIKSGSFTVEETVAVVETAEGEKEVQMMQKWPVRKPRPSKGKQPPVIPLITGQRVEDTFFGVAKGGAAAIPGPFGSGKTVTQHQLAKWSDVDVVVYIGCGERGNEMTEVIEEFPHLDDIKTGNKLMDRTVLIANTSNMPVAAREASVYTGITIAEYFRDQGLGVLLTADSTSRWAEAMREISGRLEEMPGEEGYPAYLSSKLAQFYERAGRVQCLGSEDKHGFVCIVGAVSPPGGDFSEPVTSNTLRIVKVFWALDANLARRRHFPAINWLTSYSLYIDDIAGWWQENTAADWRSLRDEAMTLLQKEAELQEIVQLVGPDALPDRERVILEIARMLREDFLQQDAYHEVDSYCSPLKQYNMLKIIMTYYTKALDAVAKGADPAGISAVTVKGDIARMKYLTDDEFINTKVPEIINKMESELGALIK.

232-239 (GPFGSGKT) lines the ATP pocket.

This sequence belongs to the ATPase alpha/beta chains family. As to quaternary structure, has multiple subunits with at least A(3), B(3), C, D, E, F, H, I and proteolipid K(x).

It is found in the cell membrane. The catalysed reaction is ATP + H2O + 4 H(+)(in) = ADP + phosphate + 5 H(+)(out). Component of the A-type ATP synthase that produces ATP from ADP in the presence of a proton gradient across the membrane. The A chain is the catalytic subunit. This is A-type ATP synthase subunit A from Methanococcus maripaludis (strain C5 / ATCC BAA-1333).